The chain runs to 205 residues: Large ribosomal subunit protein bL25 (205 aa).

Residues F178 to E205 form a disordered region. Acidic residues predominate over residues E182–E197.

The protein belongs to the bacterial ribosomal protein bL25 family. CTC subfamily. As to quaternary structure, part of the 50S ribosomal subunit; part of the 5S rRNA/L5/L18/L25 subcomplex. Contacts the 5S rRNA. Binds to the 5S rRNA independently of L5 and L18.

Its function is as follows. This is one of the proteins that binds to the 5S RNA in the ribosome where it forms part of the central protuberance. This chain is Large ribosomal subunit protein bL25, found in Cutibacterium acnes (strain DSM 16379 / KPA171202) (Propionibacterium acnes).